The following is a 339-amino-acid chain: Ketol-acid reductoisomerase (NADP(+)) (339 aa).

One can recognise a KARI N-terminal Rossmann domain in the interval 1–182 (MRVYYDRDAD…GGGRSGIIET (182 aa)). NADP(+)-binding positions include 24–27 (YGSQ), Arg48, Ser51, Thr53, and 83–86 (DEHQ). His108 is a catalytic residue. Gly134 contacts NADP(+). Positions 183–328 (NFREECETDL…ARLRGMMPWI (146 aa)) constitute a KARI C-terminal knotted domain. Mg(2+) is bound by residues Asp191, Glu195, Glu227, and Glu231. Position 252 (Ser252) interacts with substrate.

Belongs to the ketol-acid reductoisomerase family. Requires Mg(2+) as cofactor.

It carries out the reaction (2R)-2,3-dihydroxy-3-methylbutanoate + NADP(+) = (2S)-2-acetolactate + NADPH + H(+). It catalyses the reaction (2R,3R)-2,3-dihydroxy-3-methylpentanoate + NADP(+) = (S)-2-ethyl-2-hydroxy-3-oxobutanoate + NADPH + H(+). The protein operates within amino-acid biosynthesis; L-isoleucine biosynthesis; L-isoleucine from 2-oxobutanoate: step 2/4. It participates in amino-acid biosynthesis; L-valine biosynthesis; L-valine from pyruvate: step 2/4. Its function is as follows. Involved in the biosynthesis of branched-chain amino acids (BCAA). Catalyzes an alkyl-migration followed by a ketol-acid reduction of (S)-2-acetolactate (S2AL) to yield (R)-2,3-dihydroxy-isovalerate. In the isomerase reaction, S2AL is rearranged via a Mg-dependent methyl migration to produce 3-hydroxy-3-methyl-2-ketobutyrate (HMKB). In the reductase reaction, this 2-ketoacid undergoes a metal-dependent reduction by NADPH to yield (R)-2,3-dihydroxy-isovalerate. This chain is Ketol-acid reductoisomerase (NADP(+)), found in Caulobacter vibrioides (strain ATCC 19089 / CIP 103742 / CB 15) (Caulobacter crescentus).